Consider the following 104-residue polypeptide: Phosphoribosyl-ATP pyrophosphatase (104 aa).

This sequence belongs to the PRA-PH family.

Its subcellular location is the cytoplasm. The enzyme catalyses 1-(5-phospho-beta-D-ribosyl)-ATP + H2O = 1-(5-phospho-beta-D-ribosyl)-5'-AMP + diphosphate + H(+). Its pathway is amino-acid biosynthesis; L-histidine biosynthesis; L-histidine from 5-phospho-alpha-D-ribose 1-diphosphate: step 2/9. The sequence is that of Phosphoribosyl-ATP pyrophosphatase from Allorhizobium ampelinum (strain ATCC BAA-846 / DSM 112012 / S4) (Agrobacterium vitis (strain S4)).